Here is a 370-residue protein sequence, read N- to C-terminus: Acyl-CoA:lysophosphatidylglycerol acyltransferase 1 (370 aa).

A helical membrane pass occupies residues 22 to 42 (FAFMVANNLVAIPSYICYVII). Positions 101 to 106 (HQATGD) match the HXXXXD motif motif. The helical transmembrane segment at 342-362 (MWIFLIQSFAFLSGYLWYHII) threads the bilayer.

The protein belongs to the 1-acyl-sn-glycerol-3-phosphate acyltransferase family. As to expression, ubiquitous. Expressed in heart, kidney, liver, skin, intestine, and thymus. Highest expression is detected in brain and testis.

The protein resides in the endoplasmic reticulum membrane. It catalyses the reaction a 2-acyl-sn-glycero-3-phosphoethanolamine + octadecanoyl-CoA = 1-octadecanoyl-2-acyl-sn-glycero-3-phosphoethanolamine + CoA. The catalysed reaction is 2-(9Z-octadecenoyl)-sn-glycero-3-phosphoethanolamine + octadecanoyl-CoA = 1-octadecanoyl-2-(9Z-octadecenoyl)-sn-glycero-3-phosphoethanolamine + CoA. It carries out the reaction a 2-acyl-sn-glycero-3-phosphoethanolamine + hexadecanoyl-CoA = 1-hexadecanoyl-2-acyl-sn-glycero-3-phosphoethanolamine + CoA. The enzyme catalyses 2-(9Z-octadecenoyl)-sn-glycero-3-phosphoethanolamine + hexadecanoyl-CoA = 1-hexadecanoyl-2-(9Z-octadecenoyl)-sn-glycero-3-phosphoethanolamine + CoA. It catalyses the reaction 1-tetradecanoyl-sn-glycero-3-phospho-(1'-sn-glycerol) + hexadecanoyl-CoA = 1-tetradecanoyl-2-hexadecanoyl-sn-glycero-3-phospho-(1'-sn-glycerol) + CoA. The catalysed reaction is 1-hexadecanoyl-sn-glycero-3-phospho-(1'-sn-glycerol) + dodecanoyl-CoA = 1-hexadecanoyl-2-dodecanoyl-sn-glycero-3-phospho-(1'-sn-glycerol) + CoA. It carries out the reaction 1-hexadecanoyl-sn-glycero-3-phospho-(1'-sn-glycerol) + hexadecanoyl-CoA = 1,2-dihexadecanoyl-sn-glycero-3-phospho-(1'-sn-glycerol) + CoA. The enzyme catalyses 1-hexadecanoyl-sn-glycero-3-phospho-(1'-sn-glycerol) + octadecanoyl-CoA = 1-hexadecanoyl-2-octadecanoyl-sn-glycero-3-phospho-(1'-sn-glycerol) + CoA. It catalyses the reaction 1-octadecanoyl-sn-glycero-3-phospho-(1'-sn-glycerol) + hexadecanoyl-CoA = 1-octadecanoyl-2-hexadecanoyl-sn-glycero-3-phospho-(1'-sn-glycerol) + CoA. The catalysed reaction is 1-(9Z-octadecenoyl)-sn-glycero-3-phospho-(1'-sn-glycerol) + dodecanoyl-CoA = 1-(9Z-octadecenoyl)-2-dodecanoyl-sn-glycero-3-phospho-(1'-sn-glycerol) + CoA. It carries out the reaction 1-hexadecanoyl-sn-glycero-3-phospho-(1'-sn-glycerol) + (9Z)-octadecenoyl-CoA = 1-hexadecanoyl-2-(9Z-octadecenoyl)-sn-glycero-3-phospho-(1'-sn-glycerol) + CoA. The enzyme catalyses 1-(9Z-octadecenoyl)-sn-glycero-3-phospho-(1'-sn-glycerol) + hexadecanoyl-CoA = 1-(9Z-octadecenoyl)-2-hexadecanoyl-sn-glycero-3-phospho-(1'-sn-glycerol) + CoA. It catalyses the reaction 1-(9Z-octadecenoyl)-sn-glycero-3-phospho-(1'-sn-glycerol) + (9Z)-octadecenoyl-CoA = 1,2-di-(9Z-octadecenoyl)-sn-glycero-3-phospho-(1'-sn-glycerol) + CoA. The catalysed reaction is a 2-acylglycerol + an acyl-CoA = a 1,2-diacylglycerol + CoA. It carries out the reaction a 2-acylglycerol + hexadecanoyl-CoA = a 1-hexadecanoyl-2-acylglycerol + CoA. The enzyme catalyses a 1-acylglycerol + hexadecanoyl-CoA = an hexadecanoyl-acylglycerol + CoA. It catalyses the reaction a 2-acyl-sn-glycero-3-phosphocholine + an acyl-CoA = a 1,2-diacyl-sn-glycero-3-phosphocholine + CoA. The catalysed reaction is 2-(9Z-octadecenoyl)-sn-glycero-3-phosphocholine + octadecanoyl-CoA = 1-octadecanoyl-2-(9Z-octadecenoyl)-sn-glycero-3-phosphocholine + CoA. It carries out the reaction 2-(9Z,12Z-octadecadienoyl)-sn-glycero-3-phosphocholine + octadecanoyl-CoA = 1-octadecanoyl-2-(9Z,12Z)-octadecadienoyl-sn-glycero-3-phosphocholine + CoA. The enzyme catalyses 2-(5Z,8Z,11Z,14Z)-eicosatetraenoyl-sn-glycero-3-phosphocholine + octadecanoyl-CoA = 1-octadecanoyl-2-(5Z,8Z,11Z,14Z-eicosatetraenoyl)-sn-glycero-3-phosphocholine + CoA. It catalyses the reaction 2-(9Z-octadecenoyl)-sn-glycero-3-phosphocholine + hexadecanoyl-CoA = 1-hexadecanoyl-2-(9Z-octadecenoyl)-sn-glycero-3-phosphocholine + CoA. The catalysed reaction is 2-(9Z-octadecenoyl)-sn-glycero-3-phospho-L-serine + hexadecanoyl-CoA = 1-hexadecanoyl-2-(9Z-octadecenoyl)-sn-glycero-3-phospho-L-serine + CoA. It carries out the reaction 2-(4Z,7Z,10Z,13Z,16Z,19Z-docosahexaenoyl)-sn-glycero-3-phosphocholine + octadecanoyl-CoA = 1-octadecanoyl-2-(4Z,7Z,10Z,13Z,16Z,19Z-docosahexaenoyl)-sn-glycero-3-phosphocholine + CoA. The enzyme catalyses 1-(9Z-octadecenoyl)-sn-glycero-3-phospho-L-serine + octadecanoyl-CoA = 1-(9Z-octadecenoyl)-2-octadecanoyl-sn-glycero-3-phospho-L-serine + CoA. It catalyses the reaction a 2-acyl-sn-glycero-3-phosphoethanolamine + a fatty acyl-CoA = a 1,2-diacyl-sn-glycero-3-phosphoethanolamine + CoA. Functionally, lysophospholipid acyltransferase involved in fatty acyl chain remodeling of glycerophospholipids in the endoplasmic reticulum membrane. Selectively catalyzes the transfer and esterification of saturated long-chain fatty acids from acyl-CoA to the sn-1 position of 1-lyso-2-acyl phosphatidylethanolamines (1-lyso-PE, LPE), with a preference for stearoyl CoA over palmitoyl CoA as acyl donor. Acts in concert with an unknown phospholipase A1 to convert palmitate PE species into stearate ones. Provides substrates to the PE methylation pathway, controlling stearate/palmitate composition of PE and phosphatidylcholine (PC) species with an overall impact on de novo hepatic lipid synthesis, body fat content and life span. Can acylate lysophosphatidylglycerols (LPG) using various saturated fatty acyl-CoAs as acyl donors. Can also acylate monoacylglycerols with a preference for 2-monoacylglycerols over 1-monoacylglycerols. Has no activity toward lysophosphatidic acids (LPA) and lysophosphatidylcholines (LPC). In Mus musculus (Mouse), this protein is Acyl-CoA:lysophosphatidylglycerol acyltransferase 1.